Consider the following 254-residue polypeptide: MVLDAVGNPQTVLLLGGTSEIGLAICERYLHNSAARIVLACLPDDPRREDAAAAMKQAGARSVELIDFDALDTDSHPKMIEAAFSGGDVDVAIVAFGLLGDAEELWQNQRKAVQIAEINYTAAVSVGVLLAEKMRAQGFGQIIAMSSAAGERVRRANFVYGSTKAGLDGFYLGLSEALREYGVRVLVIRPGQVRTRMSAHLKEAPLTVDKEYVANLAVTASAKGKELVWAPAAFRYVMMVLRHIPRSIFRKLPI.

Asp67 is a binding site for NAD(+). Tyr160 functions as the Proton acceptor in the catalytic mechanism. Lys164 is a binding site for NAD(+).

The protein belongs to the short-chain dehydrogenases/reductases (SDR) family. Interacts with DprE1 to form an epimerase complex.

Its subcellular location is the periplasm. It carries out the reaction trans,octa-cis-decaprenylphospho-beta-D-arabinofuranose + NAD(+) = trans,octa-cis-decaprenylphospho-beta-D-erythro-pentofuranosid-2-ulose + NADH + H(+). It functions in the pathway cell wall biogenesis; cell wall polysaccharide biosynthesis. In terms of biological role, component of the DprE1-DprE2 complex that catalyzes the 2-step epimerization of decaprenyl-phospho-ribose (DPR) to decaprenyl-phospho-arabinose (DPA), a key precursor that serves as the arabinose donor required for the synthesis of cell-wall arabinans. DprE1 catalyzes the first step of epimerization, namely FAD-dependent oxidation of the C2' hydroxyl of DPR to yield the keto intermediate decaprenyl-phospho-2'-keto-D-arabinose (DPX). The intermediate DPX is then transferred to DprE2 subunit of the epimerase complex, most probably through a 'substrate channel' at the interface of DprE1-DprE2 complex. DprE2 then catalyzes the second step of epimerization, the NAD(+)-dependent reduction of DPX that leads to the formation of DPA. In Mycobacterium bovis (strain ATCC BAA-935 / AF2122/97), this protein is Decaprenylphosphoryl-2-keto-beta-D-erythro-pentose reductase.